The primary structure comprises 430 residues: MSDAASPAGSPAAEPTEHRDEDQVNETHQDDGSNHGGNDEDNDGGNDKDSDVLSEIDENEFGDDYGSRPVDIDENVAMKLKARRKTTTETTKKPKEGRRPKKRSRGDDDVDAADDDGERRPRKVRAEGERRARKEVEEQQAQQEENLTPDERRRRALERAIDAAVKNPTKRRRKKDDIDLEEETDEQIANLKVAMEKACVADNEAREQKQPAVHKLKLLPQVTAILNRTAIQDSVLDPEINFLQSVRYFLEPLNDGSLPAYNIQRAIMSALMKLPINKDVLLSSGIGKVVVYYNKSKSPSADIKRDAERLLGEWSRLILKRTDDYKKRHIEMREIDVGAVKLGQREGGSSQVTLTQRPAGKSRYEIERERALAPEVRNNNRARPVGLPASYTIAPKSTYIPGQAPTDHRPIGHSGHEAFRRMTQKGKGKR.

The segment covering 1 to 14 (MSDAASPAGSPAAE) has biased composition (low complexity). The tract at residues 1–153 (MSDAASPAGS…EENLTPDERR (153 aa)) is disordered. The span at 15–33 (PTEHRDEDQVNETHQDDGS) shows a compositional bias: basic and acidic residues. The span at 52 to 63 (VLSEIDENEFGD) shows a compositional bias: acidic residues. A compositionally biased stretch (basic residues) spans 95–104 (KEGRRPKKRS). The segment covering 124-137 (VRAEGERRARKEVE) has biased composition (basic and acidic residues). A TFIIS N-terminal domain is found at 244 to 321 (QSVRYFLEPL…GEWSRLILKR (78 aa)). Residues 402–430 (GQAPTDHRPIGHSGHEAFRRMTQKGKGKR) form a disordered region. Residues 406 to 420 (TDHRPIGHSGHEAFR) are compositionally biased toward basic and acidic residues.

This sequence belongs to the IWS1 family.

It localises to the nucleus. In terms of biological role, transcription factor involved in RNA polymerase II transcription regulation. May function in both SPT15/TBP post-recruitment and recruitment steps of transcription. This chain is Transcription factor iws-1 (iws-1), found in Neurospora crassa (strain ATCC 24698 / 74-OR23-1A / CBS 708.71 / DSM 1257 / FGSC 987).